The chain runs to 491 residues: Probable Xaa-Pro aminopeptidase AFLA_084750 (491 aa).

Mn(2+) is bound by residues Asp271, Asp282, Glu419, and Glu458.

It belongs to the peptidase M24B family. It depends on Mn(2+) as a cofactor.

The enzyme catalyses Release of any N-terminal amino acid, including proline, that is linked to proline, even from a dipeptide or tripeptide.. Functionally, catalyzes the removal of a penultimate prolyl residue from the N-termini of peptides. The protein is Probable Xaa-Pro aminopeptidase AFLA_084750 of Aspergillus flavus (strain ATCC 200026 / FGSC A1120 / IAM 13836 / NRRL 3357 / JCM 12722 / SRRC 167).